Here is a 916-residue protein sequence, read N- to C-terminus: Protein translocase subunit SecA (916 aa).

ATP-binding positions include Q87, G105 to T109, and D507. The Zn(2+) site is built by C900, C902, C911, and H912.

Belongs to the SecA family. In terms of assembly, monomer and homodimer. Part of the essential Sec protein translocation apparatus which comprises SecA, SecYEG and auxiliary proteins SecDF-YajC and YidC. The cofactor is Zn(2+).

The protein localises to the cell inner membrane. It is found in the cytoplasm. It catalyses the reaction ATP + H2O + cellular proteinSide 1 = ADP + phosphate + cellular proteinSide 2.. Part of the Sec protein translocase complex. Interacts with the SecYEG preprotein conducting channel. Has a central role in coupling the hydrolysis of ATP to the transfer of proteins into and across the cell membrane, serving both as a receptor for the preprotein-SecB complex and as an ATP-driven molecular motor driving the stepwise translocation of polypeptide chains across the membrane. This is Protein translocase subunit SecA from Neisseria meningitidis serogroup C / serotype 2a (strain ATCC 700532 / DSM 15464 / FAM18).